The following is a 760-amino-acid chain: Phosphatidylinositol N-acetylglucosaminyltransferase subunit Q (760 aa).

The next 5 membrane-spanning stretches (helical) occupy residues 278 to 298 (TVASVLLDVALGLMLLSWLHG), 349 to 371 (LYHIHLWISYIHLMSPFVEHILW), 378 to 400 (CLGLTVALSLLSDIIALLTFHIY), 446 to 468 (LFIGTLLFTILLFLLPTTALYYL), and 475 to 497 (LLVVAVQGLIHLLVDLINSLPLY). The tract at residues 696–748 (LAVGVEGPCQDEPPSPRHPLAPSAEQHPASGGLKQSLTPVPSGPGPSLPEPHG) is disordered.

The protein belongs to the PIGQ family. Component of the glycosylphosphatidylinositol-N-acetylglucosaminyltransferase (GPI-GnT) complex composed at least by PIGA, PIGC, PIGH, PIGP, PIGQ, PIGY and DPM2. Interacts with PIGA, PIGH and PIGC.

It localises to the membrane. It functions in the pathway glycolipid biosynthesis; glycosylphosphatidylinositol-anchor biosynthesis. In terms of biological role, part of the glycosylphosphatidylinositol-N-acetylglucosaminyltransferase (GPI-GnT) complex that catalyzes the transfer of N-acetylglucosamine from UDP-N-acetylglucosamine to phosphatidylinositol and participates in the first step of GPI biosynthesis. This is Phosphatidylinositol N-acetylglucosaminyltransferase subunit Q from Homo sapiens (Human).